An 801-amino-acid polypeptide reads, in one-letter code: Phosphatidylinositol 3-kinase pik3 (801 aa).

In terms of domain architecture, C2 PI3K-type spans 14 to 166; the sequence is VTARFLVKFC…RLDGLLLKLQ (153 aa). The PIK helical domain maps to 257-439; the sequence is DKDLKPNSKI…SSVMFLFQKE (183 aa). The PI3K/PI4K catalytic domain occupies 515-785; sequence IPDACTVFKS…LINDSVSALF (271 aa). The tract at residues 521–527 is G-loop; that stretch reads VFKSTMQ. A catalytic loop region spans residues 654–662; sequence GVGDRHLDN. The activation loop stretch occupies residues 673–694; it reads HADFGYILGRDPKLFSPAMKLS.

Belongs to the PI3/PI4-kinase family. Component of the autophagy-specific vps34 PI3-kinase complex I composed of vps15, atg6, pik3/vps34, atg14 and atg38. Also a component of the VPS34 PI3-kinase complex II composed of atg6, pik3, vps15 and vps38.

It catalyses the reaction a 1,2-diacyl-sn-glycero-3-phospho-(1D-myo-inositol) + ATP = a 1,2-diacyl-sn-glycero-3-phospho-(1D-myo-inositol-3-phosphate) + ADP + H(+). Phosphatidylinositol 3-kinase that functions as a part of the autophagy-specific VPS34 PI3-kinase complex I that plays a role in autophagosome assembly. This complex is essential to recruit the atg8-phosphatidylinositol conjugate and the atg12-atg5 conjugate to the pre-autophagosomal structure. Also functions as part of the VPS34 PI3-kinase complex II. The sequence is that of Phosphatidylinositol 3-kinase pik3 (pik3) from Schizosaccharomyces pombe (strain 972 / ATCC 24843) (Fission yeast).